Here is a 356-residue protein sequence, read N- to C-terminus: Glutamine synthetase root isozyme 3 (356 aa).

The GS beta-grasp domain occupies 19–99; sequence IIAEYIWIGG…VMCDCYTPAG (81 aa). The GS catalytic domain maps to 106-356; the sequence is KRYNAAKIFS…IAETTIIWKP (251 aa).

The protein belongs to the glutamine synthetase family. As to quaternary structure, homooctamer. In terms of tissue distribution, found in all the tissues examined with higher expression found in tissues of the root.

It is found in the cytoplasm. The catalysed reaction is L-glutamate + NH4(+) + ATP = L-glutamine + ADP + phosphate + H(+). Plays a role in the flow of nitrogen into nitrogenous organic compounds. The polypeptide is Glutamine synthetase root isozyme 3 (GLN4) (Zea mays (Maize)).